We begin with the raw amino-acid sequence, 283 residues long: Non-selective voltage-gated ion channel VDAC1 (283 aa).

A2 bears the N-acetylalanine mark. K12 provides a ligand contact to ATP. Residue K12 forms a Glycyl lysine isopeptide (Lys-Gly) (interchain with G-Cter in ubiquitin) linkage. The residue at position 13 (S13) is a Phosphoserine. T19 is subject to Phosphothreonine. Residue K20 coordinates ATP. N6-acetyllysine; alternate is present on K20. K20 bears the N6-succinyllysine; alternate mark. K20 participates in a covalent cross-link: Glycyl lysine isopeptide (Lys-Gly) (interchain with G-Cter in ubiquitin); alternate. A run of 2 beta stranded transmembrane segments spans residues 26–35 (LIKLDLKTKS) and 39–47 (LEFTSSGSA). Glycyl lysine isopeptide (Lys-Gly) (interchain with G-Cter in ubiquitin) cross-links involve residues K53 and K61. The beta stranded transmembrane segment at 54-64 (VTGSLETKYRW) threads the bilayer. At Y67 the chain carries Phosphotyrosine. A run of 3 beta stranded transmembrane segments spans residues 69 to 76 (LTFTEKWN), 80 to 89 (TLGTEITVED), and 95 to 104 (LKLTFDSSFS). A Phosphothreonine modification is found at T107. Residue K109 is modified to N6-acetyllysine; alternate. K109 participates in a covalent cross-link: Glycyl lysine isopeptide (Lys-Gly) (interchain with G-Cter in ubiquitin); alternate. K110 is covalently cross-linked (Glycyl lysine isopeptide (Lys-Gly) (interchain with G-Cter in ubiquitin)). 4 beta stranded membrane-spanning segments follow: residues 111–120 (NAKIKTGYKR), 123–130 (INLGCDVD), 137–145 (SIRGALVLG), and 150–158 (LAGYQMNFE). Residue K161 forms a Glycyl lysine isopeptide (Lys-Gly) (interchain with G-Cter in ubiquitin) linkage. A run of 6 beta stranded transmembrane segments spans residues 163 to 175 (RVTQSNFAVGYKT), 178 to 185 (FQLHTNVN), 189 to 198 (EFGGSIYQKV), 202 to 211 (LETAVNLAWT), 218 to 227 (RFGIAAKYQI), and 231 to 238 (ACFSAKVN). Residue S193 is modified to Phosphoserine; by NEK1. S240 carries the post-translational modification Phosphoserine. 242–244 (LIG) provides a ligand contact to NAD(+). A beta stranded transmembrane segment spans residues 242-251 (LIGLGYTQTL). The residue at position 252 (K252) is an N6-acetyllysine. A beta stranded membrane pass occupies residues 254–263 (GIKLTLSALL). NAD(+) is bound at residue 260-264 (SALLD). Residue K266 is modified to N6-acetyllysine; alternate. K266 participates in a covalent cross-link: Glycyl lysine isopeptide (Lys-Gly) (interchain with G-Cter in ubiquitin); alternate. A beta stranded membrane pass occupies residues 273–282 (HKLGLGLEFQ). A Glycyl lysine isopeptide (Lys-Gly) (interchain with G-Cter in ubiquitin) cross-link involves residue K274.

The protein belongs to the eukaryotic mitochondrial porin family. Homodimer and homotrimer; in response to cyclic AMP or calcium; oligomerization is required for scramblase activity. Component of the mitochondrial permeability transition pore complex (mPTPC), at least composed of SPG7, VDAC1 and PPIF. Interacts with SPG7, NIPSNAP2 and SLC25A30. Interacts with hexokinases including HK1. The HK1-VDAC1 complex interacts with ATF2. Interacts with BCL2L1. Interacts with BAK1. Interacts with RTL10/BOP (via BH3 domain). Interacts with amyloid-beta and APP; induces VDAC1 dephosphorylation. Interacts with TMEM41B. Interacts with BCAP31. Interacts with HSPA9; this interaction couples ITPR1 to VDAC1. In terms of processing, phosphorylation at Ser-193 by NEK1 promotes the closed conformational state preventing excessive mitochondrial membrane permeability and subsequent apoptotic cell death after injury. Phosphorylation by the AKT-GSK3B axis stabilizes the protein probably by preventing ubiquitin-mediated proteasomal degradation. Post-translationally, ubiquitinated. Undergoes monoubiquitination and polyubiquitination by PRKN; monoubiquitination at Lys-274 inhibits apoptosis, whereas polyubiquitination leads to its degradation and promotes mitophagy. Deubiquitinated by USP30. As to expression, predominantly in brain astrocytes.

It localises to the mitochondrion outer membrane. The protein localises to the cell membrane. Its subcellular location is the membrane raft. It catalyses the reaction chloride(in) = chloride(out). The catalysed reaction is K(+)(in) = K(+)(out). The enzyme catalyses ATP(in) = ATP(out). It carries out the reaction Ca(2+)(in) = Ca(2+)(out). It catalyses the reaction Na(+)(in) = Na(+)(out). The catalysed reaction is Mg(2+)(in) = Mg(2+)(out). The enzyme catalyses L-glutamate(out) = L-glutamate(in). It carries out the reaction dopamine(out) = dopamine(in). It catalyses the reaction acetylcholine(in) = acetylcholine(out). The catalysed reaction is Fe(III)-[cytochrome c](out) = Fe(III)-[cytochrome c](in). The enzyme catalyses a 1,2-diacyl-sn-glycero-3-phosphocholine(in) = a 1,2-diacyl-sn-glycero-3-phosphocholine(out). It carries out the reaction a 1,2-diacyl-sn-glycero-3-phospho-L-serine(in) = a 1,2-diacyl-sn-glycero-3-phospho-L-serine(out). With respect to regulation, inhibited by nitric oxide. Non-selective voltage-gated ion channel that mediates the transport of anions and cations through the mitochondrion outer membrane and plasma membrane. The channel at the outer mitochondrial membrane allows diffusion of small hydrophilic molecules; in the plasma membrane it is involved in cell volume regulation and apoptosis. It adopts an open conformation at low or zero membrane potential and a closed conformation at potentials above 30-40 mV. The open state has a weak anion selectivity whereas the closed state is cation-selective. Binds various signaling molecules, including the sphingolipid ceramide, the phospholipid phosphatidylcholine, and the sterols cholesterol and oxysterol. In depolarized mitochondria, acts downstream of PRKN and PINK1 to promote mitophagy or prevent apoptosis; polyubiquitination by PRKN promotes mitophagy, while monoubiquitination by PRKN decreases mitochondrial calcium influx which ultimately inhibits apoptosis. May participate in the formation of the permeability transition pore complex (PTPC) responsible for the release of mitochondrial products that triggers apoptosis. May mediate ATP export from cells. Part of a complex composed of HSPA9, ITPR1 and VDAC1 that regulates mitochondrial calcium-dependent apoptosis by facilitating calcium transport from the ER lumen to the mitochondria intermembrane space thus providing calcium for the downstream calcium channel MCU that directly releases it into mitochondria matrix. Mediates cytochrome c efflux. Its function is as follows. Catalyzes the scrambling of phospholipids across the outer mitochondrial membrane; the mechanism is unrelated to channel activity and is capable of translocating both anionic and zwitterionic phospholipids. This is Non-selective voltage-gated ion channel VDAC1 from Bos taurus (Bovine).